The following is a 122-amino-acid chain: Serum amyloid A-3 protein (122 aa).

Positions 1-18 (MKLSIGIIFCFLILGVNS) are cleaved as a signal peptide. The tract at residues 88 to 122 (GRGAEDSKADQEANQWGRSGNDPNHFRPKGLPDKY) is disordered. A compositionally biased stretch (polar residues) spans 99–109 (EANQWGRSGND).

This sequence belongs to the SAA family. In terms of tissue distribution, expressed by the liver; secreted in plasma. Expressed in synovial fibroblasts.

Its subcellular location is the secreted. Functionally, major acute phase reactant. Apolipoprotein of the HDL complex. In vitro exhibits antimicrobial activity against Escherichia coli, Streptococcus uberis and Pseudomonas aeruginosa. The polypeptide is Serum amyloid A-3 protein (SAA3) (Oryctolagus cuniculus (Rabbit)).